A 101-amino-acid polypeptide reads, in one-letter code: Gamma-secretase subunit pen-2 (101 aa).

Over 1–17 (MDISKLTDVKKVDLCKK) the chain is Lumenal. Residues 18–38 (YFLIGACFLPLVWIVNTFWFF) form a helical membrane-spanning segment. Topologically, residues 39–57 (SDAFCKPINAHRRQIRKYV) are cytoplasmic. Residues 58-78 (IASIVGSIFWIIVLSAWEIFF) form a helical membrane-spanning segment. Topologically, residues 79–101 (QHYRAQGLVWTDFLTFVFPTGRV) are lumenal.

This sequence belongs to the PEN-2 family. Component of the gamma-secretase complex, a complex probably composed of the presenilin homodimer (sel-12, hop-1 or spe-4), nicastrin (aph-2), aph-1 and pen-2. As to expression, expressed from 100-cell stage in most somatic tissues, including neurons, muscle, intestine and developing vulva. Little or not expressed in early embryos.

The protein localises to the endoplasmic reticulum membrane. The protein resides in the golgi apparatus membrane. Functionally, essential subunit of the gamma-secretase complex, an endoprotease complex that catalyzes the intramembrane cleavage of integral membrane proteins such as Notch (glp-1 or lin-12). It may represent a stabilizing cofactor for the presenilin homodimer that promotes the formation of a stable complex. In Caenorhabditis elegans, this protein is Gamma-secretase subunit pen-2 (pen-2).